Here is a 199-residue protein sequence, read N- to C-terminus: dTTP/UTP pyrophosphatase (199 aa).

Asp73 serves as the catalytic Proton acceptor.

The protein belongs to the Maf family. YhdE subfamily. The cofactor is a divalent metal cation.

It is found in the cytoplasm. The enzyme catalyses dTTP + H2O = dTMP + diphosphate + H(+). It carries out the reaction UTP + H2O = UMP + diphosphate + H(+). Nucleoside triphosphate pyrophosphatase that hydrolyzes dTTP and UTP. May have a dual role in cell division arrest and in preventing the incorporation of modified nucleotides into cellular nucleic acids. In Caldicellulosiruptor saccharolyticus (strain ATCC 43494 / DSM 8903 / Tp8T 6331), this protein is dTTP/UTP pyrophosphatase.